A 184-amino-acid chain; its full sequence is Casparian strip membrane protein 3 (184 aa).

At 1–22 (MEGSGEHGETSKGPLSKGVSRG) the chain is on the cytoplasmic side. Residues 23 to 43 (LCILDLIFRVIAVIGTLASAI) form a helical membrane-spanning segment. Residues 44–72 (AMGTTNQTMPFFTQFVQFKERYSDLPTLT) are Extracellular-facing. The N-linked (GlcNAc...) asparagine glycan is linked to N49. A helical membrane pass occupies residues 73–93 (FFVVANSIASAYLIISLPLSI). Topologically, residues 94 to 105 (VHIIRSRAKYSR) are cytoplasmic. The helical transmembrane segment at 106–126 (LILIFFDVAMLALVTAAASAG) threads the bilayer. Topologically, residues 127-159 (AAIVYLAHNGNVSANWFAICQQFDSFCERISGS) are extracellular. N-linked (GlcNAc...) asparagine glycosylation occurs at N137. Residues 160 to 180 (LIGSFAAMVVLILLILLSAVA) form a helical membrane-spanning segment. The Cytoplasmic segment spans residues 181–184 (LARR).

It belongs to the Casparian strip membrane proteins (CASP) family. As to quaternary structure, homodimer and heterodimers.

It localises to the cell membrane. Functionally, regulates membrane-cell wall junctions and localized cell wall deposition. Required for establishment of the Casparian strip membrane domain (CSD) and the subsequent formation of Casparian strips, a cell wall modification of the root endodermis that determines an apoplastic barrier between the intraorganismal apoplasm and the extraorganismal apoplasm and prevents lateral diffusion. In Brachypodium distachyon (Purple false brome), this protein is Casparian strip membrane protein 3.